Reading from the N-terminus, the 1072-residue chain is Carbamoyl phosphate synthase large chain (1072 aa).

The interval 1 to 401 (MPKRLDINTI…SLLKAVRSLE (401 aa)) is carboxyphosphate synthetic domain. Positions 129, 169, 175, 176, 208, 210, 215, 241, 242, 243, 284, and 298 each coordinate ATP. An ATP-grasp 1 domain is found at 133–327 (RTLMQELNEP…IAKLAAKIAV (195 aa)). Residues glutamine 284, glutamate 298, and asparagine 300 each contribute to the Mg(2+) site. Glutamine 284, glutamate 298, and asparagine 300 together coordinate Mn(2+). An oligomerization domain region spans residues 402–546 (LGIYHLELDH…YSTYADENEL (145 aa)). The tract at residues 547 to 929 (IVTDRKSVVV…ALYKGLVASG (383 aa)) is carbamoyl phosphate synthetic domain. The region spanning 671–861 (EAALTKLGIP…MANVATKVIL (191 aa)) is the ATP-grasp 2 domain. The ATP site is built by arginine 707, arginine 746, glutamate 752, glycine 777, valine 778, histidine 779, serine 780, glutamine 820, and glutamate 832. The Mg(2+) site is built by glutamine 820, glutamate 832, and asparagine 834. Mn(2+)-binding residues include glutamine 820, glutamate 832, and asparagine 834. Positions 930 to 1072 (INIPTHGSVI…QTKRHEVVHA (143 aa)) constitute an MGS-like domain. An allosteric domain region spans residues 930-1072 (INIPTHGSVI…QTKRHEVVHA (143 aa)).

This sequence belongs to the CarB family. Composed of two chains; the small (or glutamine) chain promotes the hydrolysis of glutamine to ammonia, which is used by the large (or ammonia) chain to synthesize carbamoyl phosphate. Tetramer of heterodimers (alpha,beta)4. Mg(2+) serves as cofactor. Requires Mn(2+) as cofactor.

The catalysed reaction is hydrogencarbonate + L-glutamine + 2 ATP + H2O = carbamoyl phosphate + L-glutamate + 2 ADP + phosphate + 2 H(+). It carries out the reaction hydrogencarbonate + NH4(+) + 2 ATP = carbamoyl phosphate + 2 ADP + phosphate + 2 H(+). It participates in amino-acid biosynthesis; L-arginine biosynthesis; carbamoyl phosphate from bicarbonate: step 1/1. It functions in the pathway pyrimidine metabolism; UMP biosynthesis via de novo pathway; (S)-dihydroorotate from bicarbonate: step 1/3. Functionally, large subunit of the glutamine-dependent carbamoyl phosphate synthetase (CPSase). CPSase catalyzes the formation of carbamoyl phosphate from the ammonia moiety of glutamine, carbonate, and phosphate donated by ATP, constituting the first step of 2 biosynthetic pathways, one leading to arginine and/or urea and the other to pyrimidine nucleotides. The large subunit (synthetase) binds the substrates ammonia (free or transferred from glutamine from the small subunit), hydrogencarbonate and ATP and carries out an ATP-coupled ligase reaction, activating hydrogencarbonate by forming carboxy phosphate which reacts with ammonia to form carbamoyl phosphate. This is Carbamoyl phosphate synthase large chain from Bacillus anthracis (strain A0248).